The sequence spans 265 residues: Tryptophan synthase alpha chain (265 aa).

Residues E48 and D59 each act as proton acceptor in the active site.

The protein belongs to the TrpA family. In terms of assembly, tetramer of two alpha and two beta chains.

It carries out the reaction (1S,2R)-1-C-(indol-3-yl)glycerol 3-phosphate + L-serine = D-glyceraldehyde 3-phosphate + L-tryptophan + H2O. The protein operates within amino-acid biosynthesis; L-tryptophan biosynthesis; L-tryptophan from chorismate: step 5/5. Its function is as follows. The alpha subunit is responsible for the aldol cleavage of indoleglycerol phosphate to indole and glyceraldehyde 3-phosphate. The chain is Tryptophan synthase alpha chain from Vesicomyosocius okutanii subsp. Calyptogena okutanii (strain HA).